Here is a 656-residue protein sequence, read N- to C-terminus: ATP-dependent RNA helicase MRH4, mitochondrial (656 aa).

The N-terminal 46 residues, 1 to 46, are a transit peptide targeting the mitochondrion; the sequence is MTSFSHLSRLRMSAFLPHVCLQCRLKTVSSLPAQSSASSLLQAVRH. The tract at residues 42–125 is disordered; it reads QAVRHASSAR…KDKDGSEKKQ (84 aa). The span at 60–71 shows a compositional bias: polar residues; sequence MTLSPNVAQSTV. Residues 96-125 show a composition bias toward basic and acidic residues; it reads NLRDRQRPRSQAELKRTSFKKDKDGSEKKQ. A Q motif motif is present at residues 157–190; the sequence is TSFDQFDLLPSVRQSVYDSALPGLEYVTPTPIQR. The region spanning 210 to 431 is the Helicase ATP-binding domain; that stretch reads QEDMPRFDQY…RERFPQIRRL (222 aa). 223-230 is a binding site for ATP; it reads AETGSGKT. Residues 246–270 form a disordered region; the sequence is AKDKEEEERMAKEELEKEQEQAKEK. The short motif at 378–381 is the DEAD box element; the sequence is DEAD. Positions 480–656 constitute a Helicase C-terminal domain; sequence DVGYQVTGQK…EAMYRGQALI (177 aa).

Belongs to the DEAD box helicase family. MRH4 subfamily.

The protein resides in the mitochondrion. It catalyses the reaction ATP + H2O = ADP + phosphate + H(+). Its function is as follows. ATP-binding RNA helicase involved in mitochondrial RNA metabolism. Required for maintenance of mitochondrial DNA. The polypeptide is ATP-dependent RNA helicase MRH4, mitochondrial (MRH4) (Coccidioides immitis (strain RS) (Valley fever fungus)).